A 1163-amino-acid polypeptide reads, in one-letter code: Genome polyprotein (1163 aa).

At 1–104 the chain is on the cytoplasmic side; the sequence is MSGRKAQGKT…LSSRKRRSYE (104 aa). The interval 38 to 72 is hydrophobic; homodimerization of capsid protein C; sequence PGPSRGVQGFIFFFLFNVLTGRKITAHLKKLWRML. The propeptide at 102–121 is ER anchor for the capsid protein C, removed in mature form by serine protease NS3; the sequence is SYEVLTVQFLILGMLLMTGG. Residues 105 to 125 form a helical membrane-spanning segment; the sequence is VLTVQFLILGMLLMTGGVTLV. Topologically, residues 126-244 are extracellular; it reads RKSRWLLLNV…GERQLQKIER (119 aa). Residues N134 and N150 are each glycosylated (N-linked (GlcNAc...) asparagine; by host). The helical transmembrane segment at 245 to 265 threads the bilayer; it reads WLVRNPFFAVTALAIAYLVGS. At 266 to 270 the chain is on the cytoplasmic side; it reads NMTQR. A helical membrane pass occupies residues 271–285; that stretch reads VVIALLVLAVGPAYS. Residues 286–730 lie on the Extracellular side of the membrane; that stretch reads AHCIGITDRD…MVFGSAFQGL (445 aa). Cystine bridges form between C288/C315, C345/C406, C359/C390, C377/C401, C467/C568, and C585/C615. Residues 383–396 form a fusion peptide region; it reads DRGWGNGCGLFGKG. The helical transmembrane segment at 731–751 threads the bilayer; that stretch reads FGGLSWITKVIMGAVLIWVGI. Residues 752–757 lie on the Extracellular side of the membrane; it reads NMRNMT. A helical transmembrane segment spans residues 758–778; that stretch reads MSMSMILVGVIMMFLSLGVGA. Residues 779 to 1163 lie on the Extracellular side of the membrane; the sequence is DQGCAINFGK…RQGPKQILVG (385 aa). Cystine bridges form between C782-C793, C833-C921, C957-C1002, C1058-C1107, C1069-C1091, and C1090-C1094. Residues N908 and N986 are each glycosylated (N-linked (GlcNAc...) asparagine; by host).

In terms of assembly, homodimer. Interacts (via N-terminus) with host EXOC1 (via C-terminus); this interaction results in EXOC1 degradation through the proteasome degradation pathway. As to quaternary structure, forms heterodimers with envelope protein E in the endoplasmic reticulum and Golgi. Homodimer; in the endoplasmic reticulum and Golgi. In terms of assembly, homodimer; Homohexamer when secreted. Interacts with envelope protein E. In terms of processing, specific enzymatic cleavages in vivo yield mature proteins. The nascent capsid protein C contains a C-terminal hydrophobic domain that act as a signal sequence for translocation of prM into the lumen of the ER. Mature capsid protein C is cleaved at a site upstream of this hydrophobic domain by NS3. prM is cleaved in post-Golgi vesicles by a host furin, releasing the mature small envelope protein M, and peptide pr. Non-structural protein 2A-alpha, a C-terminally truncated form of non-structural protein 2A, results from partial cleavage by NS3. Specific enzymatic cleavages in vivo yield mature proteins peptide 2K acts as a signal sequence and is removed from the N-terminus of NS4B by the host signal peptidase in the ER lumen. Signal cleavage at the 2K-4B site requires a prior NS3 protease-mediated cleavage at the 4A-2K site. Post-translationally, cleaved in post-Golgi vesicles by a host furin, releasing the mature small envelope protein M, and peptide pr. This cleavage is incomplete as up to 30% of viral particles still carry uncleaved prM. N-glycosylated. In terms of processing, N-glycosylated. The excreted form is glycosylated and this is required for efficient secretion of the protein from infected cells.

It is found in the virion. The protein resides in the host nucleus. It localises to the host cytoplasm. The protein localises to the host perinuclear region. Its subcellular location is the secreted. It is found in the virion membrane. The protein resides in the host endoplasmic reticulum membrane. Functionally, plays a role in virus budding by binding to the cell membrane and gathering the viral RNA into a nucleocapsid that forms the core of a mature virus particle. During virus entry, may induce genome penetration into the host cytoplasm after hemifusion induced by the surface proteins. Can migrate to the cell nucleus where it modulates host functions. Its function is as follows. Inhibits RNA silencing by interfering with host Dicer. Prevents premature fusion activity of envelope proteins in trans-Golgi by binding to envelope protein E at pH6.0. After virion release in extracellular space, gets dissociated from E dimers. In terms of biological role, acts as a chaperone for envelope protein E during intracellular virion assembly by masking and inactivating envelope protein E fusion peptide. prM is the only viral peptide matured by host furin in the trans-Golgi network probably to avoid catastrophic activation of the viral fusion activity in acidic Golgi compartment prior to virion release. prM-E cleavage is inefficient, and many virions are only partially matured. These uncleaved prM would play a role in immune evasion. Functionally, may play a role in virus budding. Exerts cytotoxic effects by activating a mitochondrial apoptotic pathway through M ectodomain. May display a viroporin activity. Its function is as follows. Binds to host cell surface receptor and mediates fusion between viral and cellular membranes. Envelope protein is synthesized in the endoplasmic reticulum in the form of heterodimer with protein prM. They play a role in virion budding in the ER, and the newly formed immature particle is covered with 60 spikes composed of heterodimer between precursor prM and envelope protein E. The virion is transported to the Golgi apparatus where the low pH causes dissociation of PrM-E heterodimers and formation of E homodimers. prM-E cleavage is inefficient, and many virions are only partially matured. These uncleaved prM would play a role in immune evasion. Involved in immune evasion, pathogenesis and viral replication. Once cleaved off the polyprotein, is targeted to three destinations: the viral replication cycle, the plasma membrane and the extracellular compartment. Essential for viral replication. Required for formation of the replication complex and recruitment of other non-structural proteins to the ER-derived membrane structures. Excreted as a hexameric lipoparticle that plays a role against host immune response. Antagonizing the complement function. Binds to the host macrophages and dendritic cells. Inhibits signal transduction originating from Toll-like receptor 3 (TLR3). In terms of biological role, component of the viral RNA replication complex that functions in virion assembly and antagonizes the host immune response. The protein is Genome polyprotein of Aedes aegypti (Yellowfever mosquito).